The following is a 252-amino-acid chain: Sugar fermentation stimulation protein homolog (252 aa).

It belongs to the SfsA family.

In Picosynechococcus sp. (strain ATCC 27264 / PCC 7002 / PR-6) (Agmenellum quadruplicatum), this protein is Sugar fermentation stimulation protein homolog.